Here is a 633-residue protein sequence, read N- to C-terminus: Probably inactive receptor-like protein kinase At2g46850 (633 aa).

A signal peptide spans 1-28; that stretch reads MPPLFLPSSSSALFLLLLLLLTLQTLTS. Residues 29–285 are Extracellular-facing; that stretch reads ISLSQPQALR…IKKHNGKKLT (257 aa). N-linked (GlcNAc...) asparagine glycosylation is found at Asn45, Asn69, and Asn231. Residues 286–306 form a helical membrane-spanning segment; sequence VLAGVLAPLFILGSLLALFCL. Residues 307-633 are Cytoplasmic-facing; the sequence is LKRPVTSHKD…SPDSIYLPKT (327 aa). Residues 355–633 enclose the Protein kinase domain; sequence FQDSQKLTQG…SPDSIYLPKT (279 aa). Residues 361-369 and Lys384 each bind ATP; that span reads LTQGKTGTI.

It belongs to the protein kinase superfamily. Ser/Thr protein kinase family.

It is found in the membrane. The sequence is that of Probably inactive receptor-like protein kinase At2g46850 from Arabidopsis thaliana (Mouse-ear cress).